The following is a 181-amino-acid chain: ATP synthase subunit delta (181 aa).

This sequence belongs to the ATPase delta chain family. As to quaternary structure, F-type ATPases have 2 components, F(1) - the catalytic core - and F(0) - the membrane proton channel. F(1) has five subunits: alpha(3), beta(3), gamma(1), delta(1), epsilon(1). F(0) has three main subunits: a(1), b(2) and c(10-14). The alpha and beta chains form an alternating ring which encloses part of the gamma chain. F(1) is attached to F(0) by a central stalk formed by the gamma and epsilon chains, while a peripheral stalk is formed by the delta and b chains.

Its subcellular location is the cell membrane. Its function is as follows. F(1)F(0) ATP synthase produces ATP from ADP in the presence of a proton or sodium gradient. F-type ATPases consist of two structural domains, F(1) containing the extramembraneous catalytic core and F(0) containing the membrane proton channel, linked together by a central stalk and a peripheral stalk. During catalysis, ATP synthesis in the catalytic domain of F(1) is coupled via a rotary mechanism of the central stalk subunits to proton translocation. This protein is part of the stalk that links CF(0) to CF(1). It either transmits conformational changes from CF(0) to CF(1) or is implicated in proton conduction. The sequence is that of ATP synthase subunit delta from Lactiplantibacillus plantarum (strain ATCC BAA-793 / NCIMB 8826 / WCFS1) (Lactobacillus plantarum).